The sequence spans 267 residues: Hydroxyethylthiazole kinase (267 aa).

M44 is a substrate binding site. 2 residues coordinate ATP: K120 and T166. G193 serves as a coordination point for substrate.

It belongs to the Thz kinase family. It depends on Mg(2+) as a cofactor.

It catalyses the reaction 5-(2-hydroxyethyl)-4-methylthiazole + ATP = 4-methyl-5-(2-phosphooxyethyl)-thiazole + ADP + H(+). It functions in the pathway cofactor biosynthesis; thiamine diphosphate biosynthesis; 4-methyl-5-(2-phosphoethyl)-thiazole from 5-(2-hydroxyethyl)-4-methylthiazole: step 1/1. Its function is as follows. Catalyzes the phosphorylation of the hydroxyl group of 4-methyl-5-beta-hydroxyethylthiazole (THZ). This Desulfitobacterium hafniense (strain DSM 10664 / DCB-2) protein is Hydroxyethylthiazole kinase.